A 284-amino-acid polypeptide reads, in one-letter code: Probable palmitoyltransferase ZDHHC24 (284 aa).

The Cytoplasmic segment spans residues Met1–Pro18. A helical transmembrane segment spans residues Leu19–Leu39. At Gly40 to Ala52 the chain is on the extracellular side. A helical transmembrane segment spans residues Leu53–Leu73. Residues Arg74–Arg137 lie on the Cytoplasmic side of the membrane. Residues Ala94–Leu144 enclose the DHHC domain. Cys124 acts as the S-palmitoyl cysteine intermediate in catalysis. A helical transmembrane segment spans residues Pro138–Gly158. The Extracellular segment spans residues Pro159 to Arg166. A helical transmembrane segment spans residues Ala167 to Gly187. The Cytoplasmic portion of the chain corresponds to Arg188–Asp201. Residues Thr202–Leu222 form a helical membrane-spanning segment. Residues Arg223–Ser284 are Extracellular-facing.

The protein belongs to the DHHC palmitoyltransferase family.

It localises to the membrane. It catalyses the reaction L-cysteinyl-[protein] + hexadecanoyl-CoA = S-hexadecanoyl-L-cysteinyl-[protein] + CoA. Its function is as follows. Probable palmitoyltransferase that could catalyze the addition of palmitate onto various protein substrates. The chain is Probable palmitoyltransferase ZDHHC24 from Homo sapiens (Human).